Consider the following 160-residue polypeptide: Siroheme decarboxylase NirH subunit (160 aa).

The protein belongs to the Ahb/Nir family. As to quaternary structure, forms a complex composed of NirDL, NirG and NirH. All proteins are required for the total conversion of siroheme to didecarboxysiroheme.

The enzyme catalyses siroheme + 2 H(+) = 12,18-didecarboxysiroheme + 2 CO2. Its pathway is porphyrin-containing compound metabolism. In terms of biological role, involved in heme d1 biosynthesis. Catalyzes the decarboxylation of siroheme into didecarboxysiroheme. Siroheme is probably decarboxylated to monodecarboxysiroheme, which is in turn decarboxylated to didecarboxysiroheme. The chain is Siroheme decarboxylase NirH subunit from Paracoccus pantotrophus (Thiosphaera pantotropha).